We begin with the raw amino-acid sequence, 437 residues long: Enolase superfamily member DDB_G0284701 (437 aa).

The Proton acceptor role is filled by lysine 217. Positions 251, 279, and 321 each coordinate Mn(2+). Catalysis depends on aspartate 395, which acts as the Proton donor.

Belongs to the mandelate racemase/muconate lactonizing enzyme family.

The chain is Enolase superfamily member DDB_G0284701 from Dictyostelium discoideum (Social amoeba).